The following is a 96-amino-acid chain: Large ribosomal subunit protein bL21 (96 aa).

The protein belongs to the bacterial ribosomal protein bL21 family. In terms of assembly, part of the 50S ribosomal subunit. Contacts protein L20.

Functionally, this protein binds to 23S rRNA in the presence of protein L20. The chain is Large ribosomal subunit protein bL21 from Sulfurihydrogenibium sp. (strain YO3AOP1).